Consider the following 350-residue polypeptide: Hydroxymethylglutaryl-CoA synthase (350 aa).

Glutamate 83 acts as the Proton donor/acceptor in catalysis. The Acyl-thioester intermediate role is filled by cysteine 115. (3S)-3-hydroxy-3-methylglutaryl-CoA-binding residues include cysteine 115 and threonine 156. Arginine 204 lines the CoA pocket. Residues threonine 206 and histidine 239 each coordinate (3S)-3-hydroxy-3-methylglutaryl-CoA. The Proton donor/acceptor role is filled by histidine 239. Lysine 244 contributes to the CoA binding site. (3S)-3-hydroxy-3-methylglutaryl-CoA contacts are provided by asparagine 271 and serine 301.

It belongs to the thiolase-like superfamily. Archaeal HMG-CoA synthase family. As to quaternary structure, interacts with acetoacetyl-CoA thiolase that catalyzes the precedent step in the pathway and with a DUF35 protein. The acetoacetyl-CoA thiolase/HMG-CoA synthase complex channels the intermediate via a fused CoA-binding site, which allows for efficient coupling of the endergonic thiolase reaction with the exergonic HMGCS reaction.

The catalysed reaction is acetoacetyl-CoA + acetyl-CoA + H2O = (3S)-3-hydroxy-3-methylglutaryl-CoA + CoA + H(+). It functions in the pathway metabolic intermediate biosynthesis; (R)-mevalonate biosynthesis; (R)-mevalonate from acetyl-CoA: step 2/3. In terms of biological role, catalyzes the condensation of acetyl-CoA with acetoacetyl-CoA to form 3-hydroxy-3-methylglutaryl-CoA (HMG-CoA). Functions in the mevalonate (MVA) pathway leading to isopentenyl diphosphate (IPP), a key precursor for the biosynthesis of isoprenoid compounds that are building blocks of archaeal membrane lipids. In Thermococcus onnurineus (strain NA1), this protein is Hydroxymethylglutaryl-CoA synthase.